The primary structure comprises 95 residues: L-amino-acid oxidase (95 aa).

It belongs to the flavin monoamine oxidase family. FIG1 subfamily. In terms of assembly, homodimer; non-covalently linked. It depends on FAD as a cofactor. Post-translationally, N-glycosylated. Expressed by the venom gland.

It localises to the secreted. It carries out the reaction an L-alpha-amino acid + O2 + H2O = a 2-oxocarboxylate + H2O2 + NH4(+). It catalyses the reaction L-leucine + O2 + H2O = 4-methyl-2-oxopentanoate + H2O2 + NH4(+). The enzyme catalyses L-phenylalanine + O2 + H2O = 3-phenylpyruvate + H2O2 + NH4(+). The catalysed reaction is L-tryptophan + O2 + H2O = indole-3-pyruvate + H2O2 + NH4(+). It carries out the reaction L-methionine + O2 + H2O = 4-methylsulfanyl-2-oxobutanoate + H2O2 + NH4(+). It catalyses the reaction L-arginine + O2 + H2O = 5-guanidino-2-oxopentanoate + H2O2 + NH4(+). Catalyzes an oxidative deamination of predominantly hydrophobic and aromatic L-amino acids, thus producing hydrogen peroxide that may contribute to the diverse toxic effects of this enzyme. Is highly active on L-Met, L-Leu, L-Phe, L-Trp, and L-Arg, and no weakly or no active on L-His, L-Tyr, L-Ile, L-Gln, and L-Lys. Exhibits diverse biological activities, such as antibacterial activity against both Gram-positive (B.subtilis) and Gram-negative (E.coli) bacteria, and inhibition of ADP- or collagen-induced platelet aggregation. Effects of snake L-amino oxidases on platelets are controversial, since they either induce aggregation or inhibit agonist-induced aggregation. These different effects are probably due to different experimental conditions. This protein may also induce hemorrhage, hemolysis, edema, apoptosis, and have antiparasitic activities. The protein is L-amino-acid oxidase of Naja oxiana (Central Asian cobra).